The sequence spans 255 residues: uncharacterized protein (255 aa).

The protein belongs to the methyltransferase superfamily.

This is an uncharacterized protein from Mycobacterium marinum (strain ATCC BAA-535 / M).